A 535-amino-acid polypeptide reads, in one-letter code: Light-independent protochlorophyllide reductase subunit B (535 aa).

Position 36 (D36) interacts with [4Fe-4S] cluster. The Proton donor role is filled by D292. 428–429 (GL) is a substrate binding site.

Belongs to the ChlB/BchB/BchZ family. As to quaternary structure, protochlorophyllide reductase is composed of three subunits; BchL, BchN and BchB. Forms a heterotetramer of two BchB and two BchN subunits. [4Fe-4S] cluster serves as cofactor.

The enzyme catalyses chlorophyllide a + oxidized 2[4Fe-4S]-[ferredoxin] + 2 ADP + 2 phosphate = protochlorophyllide a + reduced 2[4Fe-4S]-[ferredoxin] + 2 ATP + 2 H2O. It participates in porphyrin-containing compound metabolism; bacteriochlorophyll biosynthesis (light-independent). Component of the dark-operative protochlorophyllide reductase (DPOR) that uses Mg-ATP and reduced ferredoxin to reduce ring D of protochlorophyllide (Pchlide) to form chlorophyllide a (Chlide). This reaction is light-independent. The NB-protein (BchN-BchB) is the catalytic component of the complex. This Chlorobaculum parvum (strain DSM 263 / NCIMB 8327) (Chlorobium vibrioforme subsp. thiosulfatophilum) protein is Light-independent protochlorophyllide reductase subunit B.